We begin with the raw amino-acid sequence, 272 residues long: Phosphonates import ATP-binding protein PhnC (272 aa).

The region spanning Leu-2 to His-244 is the ABC transporter domain. Position 35 to 42 (Gly-35 to Ser-42) interacts with ATP.

The protein belongs to the ABC transporter superfamily. Phosphonates importer (TC 3.A.1.9.1) family. In terms of assembly, the complex is composed of two ATP-binding proteins (PhnC), two transmembrane proteins (PhnE) and a solute-binding protein (PhnD).

The protein localises to the cell inner membrane. The catalysed reaction is phosphonate(out) + ATP + H2O = phosphonate(in) + ADP + phosphate + H(+). Part of the ABC transporter complex PhnCDE involved in phosphonates import. Responsible for energy coupling to the transport system. This chain is Phosphonates import ATP-binding protein PhnC, found in Hydrogenovibrio crunogenus (strain DSM 25203 / XCL-2) (Thiomicrospira crunogena).